The following is a 287-amino-acid chain: Nitrogenase iron protein (287 aa).

Gly-8–Ser-15 contacts ATP. Cys-96 is a [4Fe-4S] cluster binding site. Arg-99 bears the ADP-ribosylarginine; by dinitrogenase reductase ADP-ribosyltransferase mark. Cys-130 provides a ligand contact to [4Fe-4S] cluster.

The protein belongs to the NifH/BchL/ChlL family. As to quaternary structure, homodimer. Requires [4Fe-4S] cluster as cofactor. Post-translationally, the reversible ADP-ribosylation of Arg-99 inactivates the nitrogenase reductase and regulates nitrogenase activity.

It catalyses the reaction N2 + 8 reduced [2Fe-2S]-[ferredoxin] + 16 ATP + 16 H2O = H2 + 8 oxidized [2Fe-2S]-[ferredoxin] + 2 NH4(+) + 16 ADP + 16 phosphate + 6 H(+). In terms of biological role, the key enzymatic reactions in nitrogen fixation are catalyzed by the nitrogenase complex, which has 2 components: the iron protein and the molybdenum-iron protein. The sequence is that of Nitrogenase iron protein from Frankia casuarinae (strain DSM 45818 / CECT 9043 / HFP020203 / CcI3).